The following is a 363-amino-acid chain: Chorismate synthase (363 aa).

NADP(+) is bound by residues arginine 47 and arginine 53. FMN-binding positions include 124 to 126 (RSS), glycine 286, 301 to 305 (KPTAT), and arginine 327.

The protein belongs to the chorismate synthase family. In terms of assembly, homotetramer. Requires FMNH2 as cofactor.

It carries out the reaction 5-O-(1-carboxyvinyl)-3-phosphoshikimate = chorismate + phosphate. The protein operates within metabolic intermediate biosynthesis; chorismate biosynthesis; chorismate from D-erythrose 4-phosphate and phosphoenolpyruvate: step 7/7. Functionally, catalyzes the anti-1,4-elimination of the C-3 phosphate and the C-6 proR hydrogen from 5-enolpyruvylshikimate-3-phosphate (EPSP) to yield chorismate, which is the branch point compound that serves as the starting substrate for the three terminal pathways of aromatic amino acid biosynthesis. This reaction introduces a second double bond into the aromatic ring system. In Thermosynechococcus vestitus (strain NIES-2133 / IAM M-273 / BP-1), this protein is Chorismate synthase.